The chain runs to 74 residues: MRAIISLLLISTMVFGVIEAVSVEEGLKIFEGERGGCVGESQQCADWSGPYCCKGYYCTCRYFPKCICVNDNGK.

The first 20 residues, 1–20, serve as a signal peptide directing secretion; the sequence is MRAIISLLLISTMVFGVIEA. Positions 21-34 are excised as a propeptide; sequence VSVEEGLKIFEGER. Cystine bridges form between C37–C53, C44–C58, C52–C68, and C60–C66. N72 carries the asparagine amide modification.

Belongs to the neurotoxin 07 (Beta/delta-agtx) family. 03 (aga-4) subfamily. Aga sub-subfamily. As to expression, expressed by the venom gland.

It is found in the secreted. In terms of biological role, insecticidal neurotoxin that modulates the insect Nav channel (DmNaV1/tipE (para/tipE)) in a unique manner, with both the activation and inactivation processes being affected. The voltage dependence of activation is shifted toward more hyperpolarized potentials (analogous to site 4 toxins) and a non-inactivating persistent sodium current is induced (site 3-like action). Interestingly, both effects take place in a voltage-dependent manner, producing a bell-shaped curve between -80 and 0 mV. This chain is U3-agatoxin-Ao1g, found in Agelena orientalis (Funnel-web spider).